The sequence spans 260 residues: Proteasome subunit alpha (260 aa).

The segment covering 237 to 248 has biased composition (low complexity); the sequence is ASTDAPAAAADS. Positions 237–260 are disordered; sequence ASTDAPAAAADSADVEERPDSEAP. Residues 251 to 260 show a composition bias toward basic and acidic residues; that stretch reads VEERPDSEAP.

Belongs to the peptidase T1A family. As to quaternary structure, the 20S proteasome core is composed of 14 alpha and 14 beta subunits that assemble into four stacked heptameric rings, resulting in a barrel-shaped structure. The two inner rings, each composed of seven catalytic beta subunits, are sandwiched by two outer rings, each composed of seven alpha subunits. The catalytic chamber with the active sites is on the inside of the barrel. Has a gated structure, the ends of the cylinder being occluded by the N-termini of the alpha-subunits. Is capped by the proteasome-associated ATPase, ARC.

The protein localises to the cytoplasm. It participates in protein degradation; proteasomal Pup-dependent pathway. Its activity is regulated as follows. The formation of the proteasomal ATPase ARC-20S proteasome complex, likely via the docking of the C-termini of ARC into the intersubunit pockets in the alpha-rings, may trigger opening of the gate for substrate entry. Interconversion between the open-gate and close-gate conformations leads to a dynamic regulation of the 20S proteasome proteolysis activity. Component of the proteasome core, a large protease complex with broad specificity involved in protein degradation. This Salinispora tropica (strain ATCC BAA-916 / DSM 44818 / JCM 13857 / NBRC 105044 / CNB-440) protein is Proteasome subunit alpha.